We begin with the raw amino-acid sequence, 83 residues long: Cytochrome b559 subunit alpha (83 aa).

The helical transmembrane segment at 21-35 (VIHSITIPSLFIAGW) threads the bilayer. Histidine 23 contributes to the heme binding site.

This sequence belongs to the PsbE/PsbF family. In terms of assembly, heterodimer of an alpha subunit and a beta subunit. PSII is composed of 1 copy each of membrane proteins PsbA, PsbB, PsbC, PsbD, PsbE, PsbF, PsbH, PsbI, PsbJ, PsbK, PsbL, PsbM, PsbT, PsbX, PsbY, PsbZ, Psb30/Ycf12, at least 3 peripheral proteins of the oxygen-evolving complex and a large number of cofactors. It forms dimeric complexes. Requires heme b as cofactor.

It localises to the plastid. It is found in the chloroplast thylakoid membrane. Functionally, this b-type cytochrome is tightly associated with the reaction center of photosystem II (PSII). PSII is a light-driven water:plastoquinone oxidoreductase that uses light energy to abstract electrons from H(2)O, generating O(2) and a proton gradient subsequently used for ATP formation. It consists of a core antenna complex that captures photons, and an electron transfer chain that converts photonic excitation into a charge separation. This chain is Cytochrome b559 subunit alpha, found in Anthoceros angustus (Hornwort).